The sequence spans 165 residues: Probable velvet family sexual development regulator CC1G_12219 (165 aa).

Residues 1–121 form the Velvet domain; that stretch reads MSNTDAQTSF…SVWGAQVNVR (121 aa).

Belongs to the velvet family.

It localises to the nucleus. In terms of biological role, velvet-domain-containing protein that probably acts as a positive regulator of sexual development. This Coprinopsis cinerea (strain Okayama-7 / 130 / ATCC MYA-4618 / FGSC 9003) (Inky cap fungus) protein is Probable velvet family sexual development regulator CC1G_12219.